The chain runs to 204 residues: N-(5'-phosphoribosyl)anthranilate isomerase (204 aa).

This sequence belongs to the TrpF family.

It carries out the reaction N-(5-phospho-beta-D-ribosyl)anthranilate = 1-(2-carboxyphenylamino)-1-deoxy-D-ribulose 5-phosphate. Its pathway is amino-acid biosynthesis; L-tryptophan biosynthesis; L-tryptophan from chorismate: step 3/5. This is N-(5'-phosphoribosyl)anthranilate isomerase from Syntrophomonas wolfei subsp. wolfei (strain DSM 2245B / Goettingen).